Consider the following 597-residue polypeptide: Alpha-1,2-mannosyltransferase MNN2 (597 aa).

Topologically, residues 1 to 6 (MIAKQK) are cytoplasmic. Residues 7–27 (IKILIGVIIVIATYHFIVSSN) traverse the membrane as a helical segment. The Extracellular segment spans residues 28 to 597 (VRSKDLSDLV…ETAEIPTVVS (570 aa)). The interval 39-89 (LGSSDKSTTENERPKNNIVTNNRLDNPPNEDIPHAEPDSPPQEPPKSGNKP) is disordered. N-linked (GlcNAc...) asparagine glycosylation is present at N382.

This sequence belongs to the MNN1/MNT family. Requires Mn(2+) as cofactor.

The protein localises to the golgi apparatus membrane. The protein operates within protein modification; protein glycosylation. With respect to regulation, enzyme activity is regulated by iron. Its function is as follows. Alpha-1,2-mannosyltransferase required for cell wall integrity. Responsible for addition of the first alpha-1,2-linked mannose to form the branches on the mannan backbone of oligosaccharides. Addition of alpha-1,2-mannose is required for stabilization of the alpha-1,6-mannose backbone and hence regulates mannan fibril length; and is important for both immune recognition and virulence. Promotes iron uptake and usage along the endocytosis pathway under iron-limiting conditions. The polypeptide is Alpha-1,2-mannosyltransferase MNN2 (MNN2) (Candida albicans (strain SC5314 / ATCC MYA-2876) (Yeast)).